Consider the following 857-residue polypeptide: A-kinase anchor protein 1, mitochondrial (857 aa).

A mitochondrion-targeting transit peptide spans 1-29; that stretch reads MAIQLRSLFPLALPGMLALLGWWWFFSRK. S55 bears the Phosphoserine mark. Residues 65–121 form a disordered region; the sequence is VAPTVTQPPGREEQRCVDKPSTEPLALPRTRQVRRRSESSGNLPSVADTRSQPGPCR. Basic and acidic residues predominate over residues 74-85; the sequence is GREEQRCVDKPS. Phosphoserine occurs at positions 101, 103, and 164. Residues 103–116 show a composition bias toward polar residues; that stretch reads SSGNLPSVADTRSQ. 2 disordered regions span residues 165–198 and 260–303; these read ALGK…GDAV and FVEP…VPEN. The span at 286–299 shows a compositional bias: basic and acidic residues; sequence SDRDLAGELDKDET. Positions 306–319 are PKA-RII subunit binding domain; it reads IKQAAFQLISQVIL. Disordered stretches follow at residues 336 to 437, 466 to 497, and 512 to 554; these read QVHP…NPRG, STSG…TQPF, and EDGW…QAGS. A compositionally biased stretch (polar residues) spans 354-379; sequence PASQETSLGQDTSDPASTRTGATASP. Position 401 is a phosphothreonine (T401). Positions 466–482 are enriched in polar residues; sequence STSGLEDSCTETISSSG. T487 is subject to Phosphothreonine. S527 and S546 each carry phosphoserine. Residues 545–554 show a composition bias toward polar residues; that stretch reads DSPQSVQAGS. The 65-residue stretch at 561 to 625 folds into the KH domain; sequence LIIWEIEVPK…HHVDKALNLI (65 aa). The Tudor domain occupies 712-771; sequence PVEITVICAAPGADGAWWRAQVVASYEETNEVEIRYVDYGGYKRVKVDVLRQIRSDFVTL.

Interacts with SLC8A3. Interacts with CFAP91. Interacts with CLPB. Interacts with NDUFS1. As to expression, highest expression in testis, heart, liver, skeletal muscle, intestine and kidney, followed by brain and lung. No expression in spleen. Isoform 1/D-AKAP1A is expressed predominantly in testis whereas isoform 4/D-AKAP1D is expressed primarily in liver. Expression is decreased in hearts of diabetic mice (at protein level).

It localises to the mitochondrion outer membrane. It is found in the mitochondrion. Its subcellular location is the endoplasmic reticulum. Its function is as follows. Differentially targeted protein that binds to type I and II regulatory subunits of protein kinase A. Anchors them to the cytoplasmic face of the mitochondrial outer membrane or allows them to reside in the endoplasmic reticulum. Involved in mitochondrial-mediated antiviral innate immunity. Promotes translocation of NDUFS1 into mitochondria to regulate mitochondrial membrane respiratory chain NADH dehydrogenase (Complex I) activity. Under diabetic conditions, myocardial AKAP1 expression decreases which blocks the translocation of NDUFS1 from the cytosol to mitochondria. Reduction of NDUFS1 in mitochondria decreases ATP production and increases mitochondrial ROS level, which causes mitochondrial dysfunction and cell apoptosis, respectively, thereby leading to cardiac dysfunction. This is A-kinase anchor protein 1, mitochondrial from Mus musculus (Mouse).